Here is a 447-residue protein sequence, read N- to C-terminus: 3-phosphoshikimate 1-carboxyvinyltransferase (447 aa).

The segment at 1–22 (MTPSLKRLSGAMRARPAPALSG) is disordered. Lys-30, Ser-31, and Arg-35 together coordinate 3-phosphoshikimate. Lys-30 contributes to the phosphoenolpyruvate binding site. Residues Gly-102 and Arg-130 each coordinate phosphoenolpyruvate. Residues Ser-173, Gln-175, Asp-325, and Lys-352 each contribute to the 3-phosphoshikimate site. Gln-175 lines the phosphoenolpyruvate pocket. The active-site Proton acceptor is Asp-325. The phosphoenolpyruvate site is built by Arg-356 and Arg-401.

The protein belongs to the EPSP synthase family. As to quaternary structure, monomer.

It is found in the cytoplasm. It carries out the reaction 3-phosphoshikimate + phosphoenolpyruvate = 5-O-(1-carboxyvinyl)-3-phosphoshikimate + phosphate. It functions in the pathway metabolic intermediate biosynthesis; chorismate biosynthesis; chorismate from D-erythrose 4-phosphate and phosphoenolpyruvate: step 6/7. Functionally, catalyzes the transfer of the enolpyruvyl moiety of phosphoenolpyruvate (PEP) to the 5-hydroxyl of shikimate-3-phosphate (S3P) to produce enolpyruvyl shikimate-3-phosphate and inorganic phosphate. This is 3-phosphoshikimate 1-carboxyvinyltransferase from Maricaulis maris (strain MCS10) (Caulobacter maris).